The sequence spans 580 residues: NADH-ubiquinone oxidoreductase chain 5 (580 aa).

A run of 16 helical transmembrane segments spans residues 12 to 32, 50 to 70, 92 to 112, 113 to 133, 153 to 173, 183 to 203, 215 to 235, 244 to 264, 274 to 293, 298 to 320, 343 to 363, 367 to 387, 427 to 447, 463 to 483, 496 to 516, and 560 to 580; these read FYFL…FLLM, IVMT…VLLI, ILLV…PNLI, SILL…IYFQ, VALL…YIFY, MMII…QIPF, TPVS…YLLI, WWMA…AGLG, IIAL…LSMG, AFFH…GSII, CSCF…AGFY, LILE…LFFF, ICFL…LMFL, LFVC…KLFF, FVGS…NYPL, and IYLL…VLVN.

This sequence belongs to the complex I subunit 5 family.

Its subcellular location is the mitochondrion inner membrane. It catalyses the reaction a ubiquinone + NADH + 5 H(+)(in) = a ubiquinol + NAD(+) + 4 H(+)(out). Functionally, core subunit of the mitochondrial membrane respiratory chain NADH dehydrogenase (Complex I) that is believed to belong to the minimal assembly required for catalysis. Complex I functions in the transfer of electrons from NADH to the respiratory chain. The immediate electron acceptor for the enzyme is believed to be ubiquinone. The protein is NADH-ubiquinone oxidoreductase chain 5 (mt:ND5) of Anopheles gambiae (African malaria mosquito).